The sequence spans 450 residues: 23S rRNA (uracil(1939)-C(5))-methyltransferase RlmD (450 aa).

The TRAM domain maps to 1 to 62 (MPVAGPLDIV…PSYEQAGVVN (62 aa)). [4Fe-4S] cluster is bound by residues cysteine 75, cysteine 81, cysteine 84, and cysteine 163. Residues glutamine 271, phenylalanine 300, asparagine 305, glutamate 321, asparagine 349, and aspartate 370 each coordinate S-adenosyl-L-methionine. Cysteine 406 functions as the Nucleophile in the catalytic mechanism.

The protein belongs to the class I-like SAM-binding methyltransferase superfamily. RNA M5U methyltransferase family. RlmD subfamily.

The enzyme catalyses uridine(1939) in 23S rRNA + S-adenosyl-L-methionine = 5-methyluridine(1939) in 23S rRNA + S-adenosyl-L-homocysteine + H(+). Its function is as follows. Catalyzes the formation of 5-methyl-uridine at position 1939 (m5U1939) in 23S rRNA. The sequence is that of 23S rRNA (uracil(1939)-C(5))-methyltransferase RlmD from Ralstonia pickettii (strain 12J).